The primary structure comprises 476 residues: Adenosylhomocysteinase (476 aa).

Residues Thr-61, Asp-140, and Glu-200 each contribute to the substrate site. 201-203 (TTT) provides a ligand contact to NAD(+). Positions 230 and 234 each coordinate substrate. Residues Asn-235, 264 to 269 (GYGDVG), Glu-287, Asn-322, 343 to 345 (IGH), and Asn-389 each bind NAD(+).

This sequence belongs to the adenosylhomocysteinase family. Requires NAD(+) as cofactor.

Its subcellular location is the cytoplasm. It carries out the reaction S-adenosyl-L-homocysteine + H2O = L-homocysteine + adenosine. Its pathway is amino-acid biosynthesis; L-homocysteine biosynthesis; L-homocysteine from S-adenosyl-L-homocysteine: step 1/1. Functionally, may play a key role in the regulation of the intracellular concentration of adenosylhomocysteine. The chain is Adenosylhomocysteinase from Acidovorax ebreus (strain TPSY) (Diaphorobacter sp. (strain TPSY)).